Reading from the N-terminus, the 216-residue chain is MKKVRKLYEGKAKIVYETDEKDKLILEFKDVATAFDGVKKEEIKGKGSLNNEISSLIFEILEDHGIKTHYIKKLSDREMLVWRAERFPVEVVVRNYAAGSFVKRYGVKEGTKLEQPLVEFFMKSDELHDPMVCINHIKVLKLAPAELVPEMEKIALKVNEILKKIFEEKGILLVDFKLEFGRLPSGELAIVDEISPDSMRLWDKSTGENWIKTDSV.

It belongs to the SAICAR synthetase family.

It carries out the reaction 5-amino-1-(5-phospho-D-ribosyl)imidazole-4-carboxylate + L-aspartate + ATP = (2S)-2-[5-amino-1-(5-phospho-beta-D-ribosyl)imidazole-4-carboxamido]succinate + ADP + phosphate + 2 H(+). It functions in the pathway purine metabolism; IMP biosynthesis via de novo pathway; 5-amino-1-(5-phospho-D-ribosyl)imidazole-4-carboxamide from 5-amino-1-(5-phospho-D-ribosyl)imidazole-4-carboxylate: step 1/2. In Aquifex aeolicus (strain VF5), this protein is Phosphoribosylaminoimidazole-succinocarboxamide synthase (purC).